Reading from the N-terminus, the 664-residue chain is UvrABC system protein B (664 aa).

In terms of domain architecture, Helicase ATP-binding spans 24–182; sequence AGLRAGYRHQ…QLIDLQFERN (159 aa). 37–44 serves as a coordination point for ATP; the sequence is GATGTGKT. A Beta-hairpin motif is present at residues 90–113; that stretch reads YYDEYTPEAYVPSKDLYIEKEASI. The Helicase C-terminal domain maps to 427–593; that stretch reads QIDDLLGEIR…GIAKGVRDLT (167 aa). One can recognise a UVR domain in the interval 624–659; sequence LKLIKDLEKQMKQAAKALAFEKAAALRDQIVELRQA.

Belongs to the UvrB family. In terms of assembly, forms a heterotetramer with UvrA during the search for lesions. Interacts with UvrC in an incision complex.

The protein resides in the cytoplasm. In terms of biological role, the UvrABC repair system catalyzes the recognition and processing of DNA lesions. A damage recognition complex composed of 2 UvrA and 2 UvrB subunits scans DNA for abnormalities. Upon binding of the UvrA(2)B(2) complex to a putative damaged site, the DNA wraps around one UvrB monomer. DNA wrap is dependent on ATP binding by UvrB and probably causes local melting of the DNA helix, facilitating insertion of UvrB beta-hairpin between the DNA strands. Then UvrB probes one DNA strand for the presence of a lesion. If a lesion is found the UvrA subunits dissociate and the UvrB-DNA preincision complex is formed. This complex is subsequently bound by UvrC and the second UvrB is released. If no lesion is found, the DNA wraps around the other UvrB subunit that will check the other stand for damage. This chain is UvrABC system protein B, found in Chloroflexus aggregans (strain MD-66 / DSM 9485).